The chain runs to 350 residues: E3 ubiquitin-protein ligase TRIM63 (350 aa).

Residues 23-79 form an RING-type zinc finger; the sequence is CPICLEMFTKPVVILPCQHNLCRKCANDIFQAANPYWTNRGGSVSMSGGRFRCPSCR. Residues 74–218 form an interaction with TTN region; sequence RCPSCRHEVI…LSQKFDTLYA (145 aa). Residues 117–159 form a B box-type zinc finger; the sequence is GSHPMCKEHEDEKINIYCLTCEVPTCSLCKVFGAHQACEVAPL. Zn(2+) is bound by residues Cys122, His125, Cys145, and His151. The stretch at 207 to 269 forms a coiled coil; sequence EELSQKFDTL…VETAIQSLDE (63 aa). The 59-residue stretch at 267–325 folds into the COS domain; it reads LDEPGGATFLSSAKQLIKSNVEASKGCQLGKTEQGFENMDYFTLDLEHIAEALRAIDFG. Residues 325–344 are compositionally biased toward acidic residues; the sequence is GTDEEEEEFTEEEADEEEGV. Residues 325 to 350 are disordered; it reads GTDEEEEEFTEEEADEEEGVTTEGHQ.

Homodimer. Homooligomer and heterooligomer. Interacts with SUMO2, titin/TTN and GMEB1. Interacts with TRIM54 and probably with TRIM55. Interacts with TNNI3. Forms a ternary complex with RACK1 and PRKCE. Interacts with CKM.

It localises to the cytoplasm. The protein localises to the nucleus. The protein resides in the myofibril. It is found in the sarcomere. Its subcellular location is the m line. It localises to the z line. It catalyses the reaction S-ubiquitinyl-[E2 ubiquitin-conjugating enzyme]-L-cysteine + [acceptor protein]-L-lysine = [E2 ubiquitin-conjugating enzyme]-L-cysteine + N(6)-ubiquitinyl-[acceptor protein]-L-lysine.. Its pathway is protein modification; protein ubiquitination. E3 ubiquitin ligase. Mediates the ubiquitination and subsequent proteasomal degradation of CKM, GMEB1 and HIBADH. Regulates the proteasomal degradation of muscle proteins under amino acid starvation, where muscle protein is catabolized to provide other organs with amino acids. Inhibits de novo skeletal muscle protein synthesis under amino acid starvation. Regulates proteasomal degradation of cardiac troponin I/TNNI3 and probably of other sarcomeric-associated proteins. May play a role in striated muscle atrophy and hypertrophy by regulating an anti-hypertrophic PKC-mediated signaling pathway. May regulate the organization of myofibrils through TTN in muscle cells. The protein is E3 ubiquitin-protein ligase TRIM63 (Trim63) of Mus musculus (Mouse).